A 374-amino-acid chain; its full sequence is uncharacterized protein (374 aa).

Positions 298-332 (TKEKLLKLHSEQKSLSEKINKLSGEKDIEQSMINN) form a coiled coil.

This is an uncharacterized protein from Acanthamoeba polyphaga (Amoeba).